A 511-amino-acid chain; its full sequence is Maturase K (511 aa).

It belongs to the intron maturase 2 family. MatK subfamily.

The protein localises to the plastid. Its subcellular location is the chloroplast. Functionally, usually encoded in the trnK tRNA gene intron. Probably assists in splicing its own and other chloroplast group II introns. In Bromelia plumieri (Karatas), this protein is Maturase K.